Reading from the N-terminus, the 957-residue chain is Receptor-like protein 34 (957 aa).

An N-terminal signal peptide occupies residues 1 to 31; it reads MKGSWVVSTSIIRITLSFTFLFICHFSDVLA. Residues 32-910 lie on the Extracellular side of the membrane; that stretch reads APTRHLCRPE…EEEDEDLISW (879 aa). Residues asparagine 78, asparagine 101, asparagine 114, asparagine 143, asparagine 167, asparagine 191, and asparagine 215 are each glycosylated (N-linked (GlcNAc...) asparagine). LRR repeat units follow at residues 120 to 143, 144 to 167, 168 to 192, 194 to 216, 217 to 240, 241 to 264, 266 to 287, 288 to 312, 313 to 336, 338 to 360, 361 to 384, 386 to 409, 412 to 434, 435 to 459, 460 to 483, 487 to 510, 511 to 534, and 535 to 557; these read LHFLTTLDRSHNDFEGQITSSIEN, LSHLTSLDLSYNRFSGQILNSIGN, LSRLTSLDLSFNQFSGQIPSSIGNL, HLTFLGLSGNRFFGQIPSSIGNL, SHLTFLGLSGNRFFGQFPSSIGGL, SNLTNLHLSYNKYSGQIPSSIGNL, QLIVLYLSVNNFYGEIPSSFGN, LNQLTRLDVSFNKLGGNFPNVLLNL, TGLSVVSLSNNKFTGTLPPNITSL, NLMAFYASDNAFTGTFPSFLFII, PSLTYLGLSGNQLKGTLEFGNISS, SNLQYLNIGSNNFIGPIPSSISKL, LQELGISHLNTQCRPVDFSIFSH, LKSLDDLRLSYLTTTTIDLNDILPY, FKTLRSLDLSGNLVSATNKSSVSS, SQSIQSLYLSGCGITDFPEILRTQ, HELGFLDVSNNKIKGQVPGWLWTL, and PNLFYLNLSNNTFIGFQRPTKPE. Residues asparagine 242 and asparagine 263 are each glycosylated (N-linked (GlcNAc...) asparagine). 2 N-linked (GlcNAc...) asparagine glycosylation sites follow: asparagine 311 and asparagine 332. N-linked (GlcNAc...) asparagine glycosylation occurs at asparagine 381. Asparagine 477 is a glycosylation site (N-linked (GlcNAc...) asparagine). Residues asparagine 541, asparagine 544, asparagine 569, asparagine 593, asparagine 608, and asparagine 618 are each glycosylated (N-linked (GlcNAc...) asparagine). One copy of the LRR 19; degenerate repeat lies at 558 to 580; that stretch reads PSMAYLLGSNNNFTGKIPSFICE. 10 LRR repeats span residues 581–605, 606–630, 632–652, 653–675, 677–698, 699–722, 765–789, 790–813, 815–837, and 839–862; these read LRSLYTLDLSDNNFSGSIPRCMENL, KSNLSELNLRQNNLSGGFPEHIFES, RSLDVGHNQLVGKLPRSLRFF, SNLEVLNVESNRINDMFPFWLSS, QKLQVLVLRSNAFHGPINQALF, PKLRIIDISHNHFNGSLPTEYFVE, LTIYTAVDFSGNKFEGEIPKSIGLL, KELHVLNLSNNAFTGHIPSSIGNL, ALESLDVSQNKLYGEIPQEIGNL, and LLSYMNFSHNQLTGLVPGGQQFLT. Asparagine 712 carries an N-linked (GlcNAc...) asparagine glycan. Residues asparagine 796, asparagine 812, asparagine 836, and asparagine 844 are each glycosylated (N-linked (GlcNAc...) asparagine). The helical transmembrane segment at 911-931 threads the bilayer; the sequence is IAAAIGFGPGIAFGLMFGYIL. The Cytoplasmic segment spans residues 932 to 957; that stretch reads VSYKPEWFMNPFGRNNRRRKRHTTTH.

This sequence belongs to the RLP family.

Its subcellular location is the cell membrane. The sequence is that of Receptor-like protein 34 from Arabidopsis thaliana (Mouse-ear cress).